The sequence spans 303 residues: tRNA dimethylallyltransferase (303 aa).

12–19 serves as a coordination point for ATP; sequence GPTGVGKT. 14 to 19 is a substrate binding site; it reads TGVGKT. Residues 37 to 40 form an interaction with substrate tRNA region; sequence DSAQ.

It belongs to the IPP transferase family. Monomer. Requires Mg(2+) as cofactor.

It catalyses the reaction adenosine(37) in tRNA + dimethylallyl diphosphate = N(6)-dimethylallyladenosine(37) in tRNA + diphosphate. Its function is as follows. Catalyzes the transfer of a dimethylallyl group onto the adenine at position 37 in tRNAs that read codons beginning with uridine, leading to the formation of N6-(dimethylallyl)adenosine (i(6)A). In Fusobacterium nucleatum subsp. nucleatum (strain ATCC 25586 / DSM 15643 / BCRC 10681 / CIP 101130 / JCM 8532 / KCTC 2640 / LMG 13131 / VPI 4355), this protein is tRNA dimethylallyltransferase.